A 760-amino-acid polypeptide reads, in one-letter code: Colleterpenol synthase (760 aa).

The segment at 14–335 (ASSGLRSKFR…YTRRYPSKAD (322 aa)) is terpene cyclase. Aspartate 95 lines the Mg(2+) pocket. The DDXXD 1 motif lies at 95-99 (DDYYD). The short motif at 233 to 241 (NDLYSWPKE) is the NSE/DTE element. The interval 336–759 (LRQPEVEFVD…LELVLRRLWI (424 aa)) is prenyltransferase. The segment at 359–400 (EEKVVSESVESLPTTEVEDEFSSSDASPGSVDQAISTPPSTT) is disordered. Residues 391–400 (QAISTPPSTT) show a composition bias toward polar residues. Residues lysine 477, arginine 480, and histidine 509 each coordinate isopentenyl diphosphate. Mg(2+) is bound by residues aspartate 516 and aspartate 520. The DDXXD 2 signature appears at 516–520 (DDIED). Residue arginine 525 coordinates dimethylallyl diphosphate. Arginine 526 contacts isopentenyl diphosphate. Residues lysine 605, threonine 606, glutamine 643, asparagine 650, lysine 660, and lysine 670 each contribute to the dimethylallyl diphosphate site.

This sequence in the N-terminal section; belongs to the terpene synthase family. It in the C-terminal section; belongs to the FPP/GGPP synthase family. In terms of assembly, hexamer. Mg(2+) is required as a cofactor.

The enzyme catalyses 5 isopentenyl diphosphate + dimethylallyl diphosphate = all-trans-hexaprenyl diphosphate + 5 diphosphate. The catalysed reaction is all-trans-hexaprenyl diphosphate + H2O = colleterpenol + diphosphate. Its function is as follows. Bifunctional terpene synthase that converts dimethylallyl diphosphate (DMAPP) and isopentenyl diphosphate (IPP) into colleterpenol as a single product. The C-terminal prenyltransferase (PT) domain of CgCS catalyzes formation of hexaprenyl diphosphate (HexPP), whereas the N-terminal terpene cyclase (TC) domain catalyzes the cyclization of HexPP to colleterpenol. The sequence is that of Colleterpenol synthase from Colletotrichum gloeosporioides (Anthracnose fungus).